A 544-amino-acid chain; its full sequence is MPGKPKHLGVPNGRMVLAVSDGELTSTSGSQAQGEGRGSSLSIHSLPSGPSSPFSTDEQPVASWAQSFERLLQDPRGLAYFTEFLKKEFSAENVTFWQACERFQQIPASDTKQLAQEAHNIYHEFLSSQALSPVNIDRQAWLSEEVLAQPRPDMFRAQQLQIFNLMKFDSYARFVKSPLYQECLLAEAEGRPLREPGSSHLGSPDTARKKPKLKPGKSLPLGVEELGQLPLAEGRPLRKSFRREMPGGAVNSALRRESQGSLNSSASLDLGFLAFVSSKSESHRKSLGSGEGESESRPGKYCCVYLPDGTASLALARPGLTIRDMLAGICEKRGLSLPDIKVYLVGKEQKALVLDQDCTVLADQEVRLENRITFQLELVGLERVVRISAKPTKRLQEALQPILAKHGLSLDQVVLHRPGEKQLVDLENLVSSVASQTLVLDTLPDAKTREASSIPPCRSQGCLPRTQTKDSHLPPLSSSLSVEDASGSTGKRQTCDIEGLVELLNRVQSSGAHDQRGLLRKEDLVLPEFLQLPSQRPGSQEAPP.

A disordered region spans residues 19-59; that stretch reads VSDGELTSTSGSQAQGEGRGSSLSIHSLPSGPSSPFSTDEQ. 8 positions are modified to phosphoserine: Ser20, Ser42, Ser45, Ser143, Ser199, Ser203, Ser218, and Ser286. The span at 23 to 58 shows a compositional bias: polar residues; it reads ELTSTSGSQAQGEGRGSSLSIHSLPSGPSSPFSTDE. Positions 67-184 constitute an RGS domain; that stretch reads SFERLLQDPR…VKSPLYQECL (118 aa). The disordered stretch occupies residues 191–220; that stretch reads RPLREPGSSHLGSPDTARKKPKLKPGKSLP. Residues 297-424 are necessary for interaction with RABGEF1; sequence RPGKYCCVYL…LHRPGEKQLV (128 aa). RBD domains follow at residues 300 to 371 and 373 to 443; these read KYCC…LENR and TFQL…LDTL. Positions 449–493 are disordered; that stretch reads REASSIPPCRSQGCLPRTQTKDSHLPPLSSSLSVEDASGSTGKRQ. Ser481 is modified (phosphoserine). The GoLoco domain occupies 497 to 519; sequence IEGLVELLNRVQSSGAHDQRGLL.

Interacts with GNAI1, GNAI2 and GNAI3. Interacts with GNAO1. Interacts (via RGS and GoLoco domains) with GNAI1; the interaction occurs in the centrosomes. Interaction with GNAI1 or GNAI3 (via active GTP- or inactive GDP-bound forms) prevents association of RGS14 with centrosomes or nuclear localization. Interacts with RABGEF1; the interactions is GTP-dependent. Interacts with RAP2A; the interactions is GTP-dependent and does not alter its function on G(i) alpha subunits either as GAP or as GDI. Associates with microtubules. Found in a complex with at least BRAF, HRAS, MAP2K1, MAPK3 and RGS14. Interacts with RIC8A (via C-terminus). Interacts (via RBD 1 domain) with HRAS (active GTP-bound form preferentially). Interacts (via RBD domains) with BRAF (via N-terminus); the interaction mediates the formation of a ternary complex with RAF1. Interacts (via RBD domains) with RAF1 (via N-terminus); the interaction mediates the formation of a ternary complex with BRAF. Interacts with KRAS (active GTP-bound form preferentially), MRAS (active GTP-bound form preferentially), NRAS (active GTP-bound form preferentially) and RRAS (active GTP-bound form preferentially). In terms of processing, phosphorylated by PKC. Phosphorylation is increased in presence of forskolin and may enhance the GDI activity on G(i) alpha subunit GNAI1. In terms of tissue distribution, expressed in neurons of the V2 secondary visual cortex area (at protein level). Expressed at high levels in the brain cortex, hippocampus, striatum, thalamus and substantia nigra, in the lung, and spleen. Low expression has been found in heart, liver, skeletal muscle and testis.

It is found in the nucleus. The protein localises to the PML body. Its subcellular location is the cytoplasm. The protein resides in the membrane. It localises to the cell membrane. It is found in the cytoskeleton. The protein localises to the microtubule organizing center. Its subcellular location is the centrosome. The protein resides in the spindle. It localises to the spindle pole. It is found in the cell projection. The protein localises to the dendrite. Its subcellular location is the dendritic spine. The protein resides in the postsynaptic density. In terms of biological role, regulates G protein-coupled receptor signaling cascades. Inhibits signal transduction by increasing the GTPase activity of G protein alpha subunits, thereby driving them into their inactive GDP-bound form. Besides, modulates signal transduction via G protein alpha subunits by functioning as a GDP-dissociation inhibitor (GDI). Has GDI activity on G(i) alpha subunits GNAI1 and GNAI3, but not on GNAI2 and G(o)-alpha subunit GNAO1. Has GAP activity on GNAI0, GNAI2 and GNAI3. May act as a scaffold integrating G protein and Ras/Raf MAPkinase signaling pathways. Inhibits platelet-derived growth factor (PDGF)-stimulated ERK1/ERK2 phosphorylation; a process depending on its interaction with HRAS and that is reversed by G(i) alpha subunit GNAI1. Acts as a positive modulator of microtubule polymerisation and spindle organization through a G(i)-alpha-dependent mechanism. Plays a role in cell division; required for completion of the first mitotic division of the embryo. Involved in visual memory processing capacity; when overexpressed in the V2 secondary visual cortex area. Involved in hippocampal-based learning and memory; acts as a suppressor of synaptic plasticity in CA2 neurons. Required for the nerve growth factor (NGF)-mediated neurite outgrowth. Involved in stress resistance. This chain is Regulator of G-protein signaling 14 (Rgs14), found in Rattus norvegicus (Rat).